Consider the following 185-residue polypeptide: Probable E3 ubiquitin-protein ligase ATL44 (185 aa).

Residues 29-49 (VVILSALLCALICVAGLAAVV) traverse the membrane as a helical segment. An RING-type; atypical zinc finger spans residues 102-144 (CAICLTDFADGEEIRVLPLCGHSFHVECIDKWLVSRSSCPSCR). Positions 163–185 (MKDQAHRHQHHQHSSTTIPTFLP) are disordered. Residues 176–185 (SSTTIPTFLP) are compositionally biased toward polar residues.

This sequence belongs to the RING-type zinc finger family. ATL subfamily. In terms of assembly, interacts with BIK1. In terms of processing, auto-monoubiquitination. Expressed in stems, flowers and green siliques.

The protein localises to the membrane. The catalysed reaction is S-ubiquitinyl-[E2 ubiquitin-conjugating enzyme]-L-cysteine + [acceptor protein]-L-lysine = [E2 ubiquitin-conjugating enzyme]-L-cysteine + N(6)-ubiquitinyl-[acceptor protein]-L-lysine.. The protein operates within protein modification; protein ubiquitination. Functionally, E3 ubiquitin-protein ligase that possess E3 ubiquitin ligase activity in vitro and mediates protein monoubiquitination. Triggers the monoubiquitination of phosphorylated BIK1 in response to pathogen-associated molecular pattern (PAMP) detection. This chain is Probable E3 ubiquitin-protein ligase ATL44, found in Arabidopsis thaliana (Mouse-ear cress).